A 92-amino-acid polypeptide reads, in one-letter code: Transcription factor S4 (92 aa).

A ZR-N region spans residues 1-31; that stretch reads MRFCPKCGSFLKVKGNKMVCSKCGYSDHDVE. Zn(2+) contacts are provided by cysteine 4, cysteine 7, cysteine 20, and cysteine 23. The flexible linker stretch occupies residues 32 to 56; it reads KVILKENVAHENDKTIIADGETIEG. Positions 55 to 92 are ZR-C; sequence EGRVAISLCPRCGSVRAILLNKKKRLYRCMTCNFVYNI. Residues cysteine 63 and cysteine 66 each coordinate Zn(2+). Residues lysine 76, lysine 77, and lysine 78 contribute to the active site. Zn(2+) contacts are provided by cysteine 83 and cysteine 86.

Belongs to the archaeal RpoM/eukaryotic RPA12/RPB9/RPC11 RNA polymerase family. In terms of assembly, interacts with RNA polymerase. Zn(2+) serves as cofactor.

A potent inhibitor of RNA polymerase (RNAP) probably involved in viral defense. Destabilizes the transcription pre-initiation complex of TBP, TFB, DNA and RNAP, inhibits abortive transcription initiation, productive initiation and transcription elongation. Increases the RNAP KM for NTPs about 50-fold. Overexpression of TFS1-tip4 (TFS1 with the active tip of this protein, phenocopies this protein) in S.acidocaldarius MW001 leads to severe growth inhibition. When bound to RNAP induces conformational changes that widen the DNA-binding channel, probably destabilizing the interaction of DNA with RNAP. The chain is Transcription factor S4 from Saccharolobus solfataricus (strain ATCC 35092 / DSM 1617 / JCM 11322 / P2) (Sulfolobus solfataricus).